The sequence spans 357 residues: Non-structural protein NS2 (357 aa).

Disordered stretches follow at residues 169-191 and 229-266; these read PRLQ…DEAK and DERD…HPKT. The span at 233–249 shows a compositional bias: basic and acidic residues; that stretch reads EGDRDERGDEEQVKTLS. Over residues 250–260 the composition is skewed to acidic residues; the sequence is DDDDQGEDASD.

Belongs to the orbivirus non-structural protein NS2 family.

Functionally, single-stranded RNA-binding protein. In Antilocapra americana (Pronghorn), this protein is Non-structural protein NS2 (Segment-8).